Here is a 163-residue protein sequence, read N- to C-terminus: Ribosome maturation factor RimP (163 aa).

This sequence belongs to the RimP family.

The protein resides in the cytoplasm. In terms of biological role, required for maturation of 30S ribosomal subunits. In Polynucleobacter asymbioticus (strain DSM 18221 / CIP 109841 / QLW-P1DMWA-1) (Polynucleobacter necessarius subsp. asymbioticus), this protein is Ribosome maturation factor RimP.